A 39-amino-acid polypeptide reads, in one-letter code: Conotoxin Cl14.7 (39 aa).

Positions 1–15 (MGDLSEADSMKHQLQ) are excised as a propeptide.

Post-translationally, contains 2 disulfide bonds. As to expression, expressed by the venom duct.

The protein resides in the secreted. The polypeptide is Conotoxin Cl14.7 (Californiconus californicus (California cone)).